The primary structure comprises 453 residues: MKFLALAALFASTVSSIAVDGLIPGARVIPANDVVALKKVGAHHQKHPHRRTVIIRPSFNDEDDVSADFLWGIKWANRGGRLLLQKGKKYVIGKKLDLTFLKDIEVQLDGELKFTNDVPYWQANNFYYDFQKSISFWRWGGEDIKIFGSGVLNGNGQRWYNEFAGQEILDPNNKYYRPILFVTENATRVSVEGITQLNSPCWTNFFVRTKDISFNNVFIHAYSTNASALPKNTDGFDTLNVDGLTVTNTRVDIGDDCLSPKPNTTNVFVQNLWCNGTHGTSMGSIGQYPGVLDIIENVWIENVTLLNGENGARLKAWAGPNVGYGRINNVTYKNIHVENTDNPIVLDQCYFNINATQCAAYPSRVNFTNIVFENIYGTSSGKHGKVVADLTCSPNAVCSGIRLKNIHLTSPAGSPPVIVCDGIQGDIGVECQSSTNLTTKRSIGLARNLKYKA.

Residues 1 to 16 form the signal peptide; it reads MKFLALAALFASTVSS. Asn-185 and Asn-225 each carry an N-linked (GlcNAc...) asparagine glycan. Catalysis depends on Asp-255, which acts as the Proton donor. Residues Cys-257 and Cys-274 are joined by a disulfide bond. Asn-263 and Asn-275 each carry an N-linked (GlcNAc...) asparagine glycan. His-278 is an active-site residue. 2 PbH1 repeats span residues 295–316 and 327–348; these read IENV…RLKA and INNV…VLDQ. N-linked (GlcNAc...) asparagine glycans are attached at residues Asn-302, Asn-329, Asn-354, and Asn-366. A PbH1 3 repeat occupies 362-405; that stretch reads PSRVNFTNIVFENIYGTSSGKHGKVVADLTCSPNAVCSGIRLKN. Cys-392 and Cys-398 are oxidised to a cystine. An N-linked (GlcNAc...) asparagine glycan is attached at Asn-436.

This sequence belongs to the glycosyl hydrolase 28 family.

It is found in the secreted. The catalysed reaction is [(1-&gt;4)-alpha-D-galacturonosyl](n) + H2O = alpha-D-galacturonate + [(1-&gt;4)-alpha-D-galacturonosyl](n-1). In terms of biological role, specific in hydrolyzing the terminal glycosidic bond of polygalacturonic acid and oligogalacturonates. The sequence is that of Probable exopolygalacturonase B (pgxB) from Neosartorya fischeri (strain ATCC 1020 / DSM 3700 / CBS 544.65 / FGSC A1164 / JCM 1740 / NRRL 181 / WB 181) (Aspergillus fischerianus).